Reading from the N-terminus, the 300-residue chain is Acetylglutamate kinase (300 aa).

Residues 68-69 (GG), arginine 90, and asparagine 194 each bind substrate.

This sequence belongs to the acetylglutamate kinase family. ArgB subfamily.

It localises to the cytoplasm. It carries out the reaction N-acetyl-L-glutamate + ATP = N-acetyl-L-glutamyl 5-phosphate + ADP. Its pathway is amino-acid biosynthesis; L-arginine biosynthesis; N(2)-acetyl-L-ornithine from L-glutamate: step 2/4. Catalyzes the ATP-dependent phosphorylation of N-acetyl-L-glutamate. The protein is Acetylglutamate kinase of Methanocella arvoryzae (strain DSM 22066 / NBRC 105507 / MRE50).